Here is a 119-residue protein sequence, read N- to C-terminus: Basic phospholipase A2 (119 aa).

Intrachain disulfides connect C11/C71, C27/C118, C29/C45, C44/C99, C51/C92, C60/C85, and C78/C90. 3 residues coordinate Ca(2+): Y28, G30, and G32. The active site involves H48. Residue D49 participates in Ca(2+) binding. D93 is a catalytic residue.

This sequence belongs to the phospholipase A2 family. Group I subfamily. D49 sub-subfamily. Requires Ca(2+) as cofactor. As to expression, expressed by the venom gland.

It is found in the secreted. It catalyses the reaction a 1,2-diacyl-sn-glycero-3-phosphocholine + H2O = a 1-acyl-sn-glycero-3-phosphocholine + a fatty acid + H(+). Functionally, snake venom phospholipase A2 (PLA2) that has several activities. It is myotoxic, has weak anticoagulant activity and inhibits neuromuscular transmission by blocking acetylcholine release from the nerve termini. PLA2 catalyzes the calcium-dependent hydrolysis of the 2-acyl groups in 3-sn-phosphoglycerides. The protein is Basic phospholipase A2 of Hydrophis schistosus (Beaked sea snake).